Consider the following 203-residue polypeptide: MAKAYDHLFKLLLIGDSGVGKTCLIIRFAEDNFNNTYISTIGIDFRIRTVDIEGKKIKLQVWDTAGQERFKTITTAYYRGAMGIILVYDITDEKSFENIQNWMKSIKENASAGVERLLLGNKCDMEAKRKVQKEQADKLAREHGIRFFETSAKSSMNVDEAFSSLARDILLKSGGRRLKNNNKPPSTDLKTCDKKNTNKCSLA.

Positions 17, 18, 20, 21, 22, 23, and 40 each coordinate GTP. Mg(2+) is bound at residue T22. The Switch 1 signature appears at 31-45 (DNFNNTYISTIGIDF). T40 is a Mg(2+) binding site. K58 participates in a covalent cross-link: Glycyl lysine isopeptide (Lys-Gly) (interchain with G-Cter in ubiquitin). Residue D63 coordinates Mg(2+). Residues 63–80 (DTAGQERFKTITTAYYRG) carry the Switch 2 motif. Residues G66, N121, K122, D124, A152, and K153 each coordinate GTP. C200 carries the cysteine methyl ester modification. C200 is lipidated: S-geranylgeranyl cysteine. The propeptide at 201 to 203 (SLA) is removed in mature form.

The protein belongs to the small GTPase superfamily. Rab family. In terms of assembly, interacts (GTP-bound form) with MICALL2; competes with RAB8A and is involved in tight junctions assembly. Interacts (GTP-bound form) with MICALL1. Interacts (GTP-bound form) with MICAL1, MICAL3, MICALCL, EHBP1 and EHBP1L1; ternary complexes of RAB8A, RAB13 and either MICAL1 or EHBP1L1 are possible. Interacts with PRKACA; downstream effector of RAB13 involved in tight junction assembly. Interacts with GRB2; may recruit RAB13 to the leading edge of migrating endothelial cells where it can activate RHOA. Interacts (isoprenylated form) with PDE6D; dissociates RAB13 from membranes. Interacts with BICDL2/BICDR2. Interacts with LEPROT and LEPROTL1. Mg(2+) serves as cofactor. Ubiquitinated via 'Lys-11'-linked ubiquitination on Lys-58; impairing the recruitment of guanosine diphosphate (GDP) dissociation inhibitor 1/GDI1.

Its subcellular location is the cell membrane. The protein localises to the cytoplasmic vesicle membrane. It localises to the cell junction. It is found in the tight junction. The protein resides in the golgi apparatus. Its subcellular location is the trans-Golgi network membrane. The protein localises to the recycling endosome membrane. It localises to the cell projection. It is found in the lamellipodium. The enzyme catalyses GTP + H2O = GDP + phosphate + H(+). With respect to regulation, regulated by guanine nucleotide exchange factors (GEFs) including DENND1C, which promote the exchange of bound GDP for free GTP. Regulated by GTPase activating proteins (GAPs) which increase the GTP hydrolysis activity. Inhibited by GDP dissociation inhibitors (GDIs). Activated in response to insulin. The small GTPases Rab are key regulators of intracellular membrane trafficking, from the formation of transport vesicles to their fusion with membranes. Rabs cycle between an inactive GDP-bound form and an active GTP-bound form that is able to recruit to membranes different sets of downstream effectors directly responsible for vesicle formation, movement, tethering and fusion. RAB13 is involved in endocytic recycling and regulates the transport to the plasma membrane of transmembrane proteins like the tight junction protein OCLN/occludin. Thereby, it regulates the assembly and the activity of tight junctions. Moreover, it may also regulate tight junction assembly by activating the PKA signaling pathway and by reorganizing the actin cytoskeleton through the activation of the downstream effectors PRKACA and MICALL2 respectively. Through its role in tight junction assembly, may play a role in the establishment of Sertoli cell barrier. Plays also a role in angiogenesis through regulation of endothelial cells chemotaxis. Also involved in neurite outgrowth. Has also been proposed to play a role in post-Golgi membrane trafficking from the TGN to the recycling endosome. Finally, it has been involved in insulin-induced transport to the plasma membrane of the glucose transporter GLUT4 and therefore may play a role in glucose homeostasis. The polypeptide is Ras-related protein Rab-13 (RAB13) (Bos taurus (Bovine)).